Reading from the N-terminus, the 125-residue chain is MRHYEIVFIVHPDQSEQVPAMVERYKGMVLGQNGKIHRLEDWGRRQLAYPIQKIHKAHYVMMNIECGKETLEEIEHAFKFNDAVLRHLTIKMDRAVTEASPMMKEEKAKNLLAPQSDAAEPTAAA.

A disordered region spans residues 101-125; the sequence is PMMKEEKAKNLLAPQSDAAEPTAAA.

Belongs to the bacterial ribosomal protein bS6 family.

Its function is as follows. Binds together with bS18 to 16S ribosomal RNA. The protein is Small ribosomal subunit protein bS6 of Laribacter hongkongensis (strain HLHK9).